Consider the following 488-residue polypeptide: Probable glycine dehydrogenase (decarboxylating) subunit 2 (488 aa).

At K274 the chain carries N6-(pyridoxal phosphate)lysine.

The protein belongs to the GcvP family. C-terminal subunit subfamily. The glycine cleavage system is composed of four proteins: P, T, L and H. In this organism, the P 'protein' is a heterodimer of two subunits. The cofactor is pyridoxal 5'-phosphate.

The enzyme catalyses N(6)-[(R)-lipoyl]-L-lysyl-[glycine-cleavage complex H protein] + glycine + H(+) = N(6)-[(R)-S(8)-aminomethyldihydrolipoyl]-L-lysyl-[glycine-cleavage complex H protein] + CO2. In terms of biological role, the glycine cleavage system catalyzes the degradation of glycine. The P protein binds the alpha-amino group of glycine through its pyridoxal phosphate cofactor; CO(2) is released and the remaining methylamine moiety is then transferred to the lipoamide cofactor of the H protein. This chain is Probable glycine dehydrogenase (decarboxylating) subunit 2, found in Listeria welshimeri serovar 6b (strain ATCC 35897 / DSM 20650 / CCUG 15529 / CIP 8149 / NCTC 11857 / SLCC 5334 / V8).